A 505-amino-acid polypeptide reads, in one-letter code: Glycerol kinase 3 (505 aa).

An ADP-binding site is contributed by threonine 12. The ATP site is built by threonine 12, threonine 13, and serine 14. Residue threonine 12 participates in sn-glycerol 3-phosphate binding. Arginine 16 is a binding site for ADP. Residues arginine 82, glutamate 83, tyrosine 134, and aspartate 249 each contribute to the sn-glycerol 3-phosphate site. Arginine 82, glutamate 83, tyrosine 134, aspartate 249, and glutamine 250 together coordinate glycerol. ADP-binding residues include threonine 271 and glycine 315. ATP contacts are provided by threonine 271, glycine 315, glutamine 319, and glycine 416. ADP contacts are provided by glycine 416 and asparagine 420.

The protein belongs to the FGGY kinase family.

The enzyme catalyses glycerol + ATP = sn-glycerol 3-phosphate + ADP + H(+). It participates in polyol metabolism; glycerol degradation via glycerol kinase pathway; sn-glycerol 3-phosphate from glycerol: step 1/1. Inhibited by fructose 1,6-bisphosphate (FBP). Functionally, key enzyme in the regulation of glycerol uptake and metabolism. Catalyzes the phosphorylation of glycerol to yield sn-glycerol 3-phosphate. The protein is Glycerol kinase 3 of Streptomyces avermitilis (strain ATCC 31267 / DSM 46492 / JCM 5070 / NBRC 14893 / NCIMB 12804 / NRRL 8165 / MA-4680).